The following is a 214-amino-acid chain: Ribosomal RNA large subunit methyltransferase E (214 aa).

S-adenosyl-L-methionine-binding residues include Gly60, Trp62, Asp86, Asp102, and Asp127. Lys167 (proton acceptor) is an active-site residue.

This sequence belongs to the class I-like SAM-binding methyltransferase superfamily. RNA methyltransferase RlmE family.

The protein resides in the cytoplasm. It catalyses the reaction uridine(2552) in 23S rRNA + S-adenosyl-L-methionine = 2'-O-methyluridine(2552) in 23S rRNA + S-adenosyl-L-homocysteine + H(+). Functionally, specifically methylates the uridine in position 2552 of 23S rRNA at the 2'-O position of the ribose in the fully assembled 50S ribosomal subunit. The sequence is that of Ribosomal RNA large subunit methyltransferase E from Janthinobacterium sp. (strain Marseille) (Minibacterium massiliensis).